The primary structure comprises 504 residues: UNC93-like protein C922.05c (504 aa).

11 consecutive transmembrane segments (helical) span residues 64 to 84 (IIVSWVCFLCPGMFNALSGLG), 97 to 116 (ANVALYSTFAGLGFFAGSIC), 123 to 145 (LTLAIGGTGYSVYTASLLCYKHV), 149 to 169 (GFVIFGGCYLGLTAGMLWAAQ), 186 to 206 (IAIFWGIFNLGAVIGSIVPLA), 219 to 239 (GTYAGFIVLMAVGSALALFMV), 275 to 293 (YWVLLLFPMFFSSNWFTTY), 310 to 330 (LNNLLYWFAQIMGSAVAALFL), 343 to 363 (VGWGLVFVLICVIWGGGLAFQ), 391 to 411 (FLYIFYGMLDAIFQSYAYWII), and 452 to 472 (YFASCWALLCGSLIVASPVIW).

It belongs to the unc-93 family.

The protein localises to the cytoplasm. It is found in the membrane. The polypeptide is UNC93-like protein C922.05c (Schizosaccharomyces pombe (strain 972 / ATCC 24843) (Fission yeast)).